The chain runs to 366 residues: 3-dehydroquinate synthase (366 aa).

NAD(+)-binding positions include 107–111 (GVIGD), 131–132 (TS), Lys144, and Lys153. Zn(2+) contacts are provided by Glu186, His251, and His268.

Belongs to the sugar phosphate cyclases superfamily. Dehydroquinate synthase family. It depends on Co(2+) as a cofactor. Zn(2+) serves as cofactor. NAD(+) is required as a cofactor.

It localises to the cytoplasm. The enzyme catalyses 7-phospho-2-dehydro-3-deoxy-D-arabino-heptonate = 3-dehydroquinate + phosphate. The protein operates within metabolic intermediate biosynthesis; chorismate biosynthesis; chorismate from D-erythrose 4-phosphate and phosphoenolpyruvate: step 2/7. Catalyzes the conversion of 3-deoxy-D-arabino-heptulosonate 7-phosphate (DAHP) to dehydroquinate (DHQ). The sequence is that of 3-dehydroquinate synthase from Rippkaea orientalis (strain PCC 8801 / RF-1) (Cyanothece sp. (strain PCC 8801)).